A 150-amino-acid chain; its full sequence is Large ribosomal subunit protein bL9 (150 aa).

The protein belongs to the bacterial ribosomal protein bL9 family.

Binds to the 23S rRNA. The sequence is that of Large ribosomal subunit protein bL9 from Streptococcus pyogenes serotype M5 (strain Manfredo).